Consider the following 114-residue polypeptide: Adapter SH3BGRL (114 aa).

A required for interaction with HER2 region spans residues 13 to 50 (STAIKKKQQDVLGFLEANKIGFEEKDIAANEENRKWMR). Positions 54-71 (PENSRPATGYPLPPQIFN) are required for interaction with PFN1, HER2, and ATG12. An SH3-binding motif is present at residues 61 to 67 (TGYPLPP).

The protein belongs to the SH3BGR family. In terms of assembly, monomer. Interacts with PFN1/Profilin-1. Interacts with ERBB2. Interacts with ATG12. Interacts with BECN1. Interacts with translating ribosomes. Ubiquitous.

It is found in the cytoplasm. It localises to the cytosol. Its subcellular location is the cell membrane. Functionally, appears to function as an adapter protein that bridges proteins together or proteins with mRNAs. May function as a ubiquitin ligase-substrate adapter. Additionally, associates with translating cytoplasmic ribosomes and may promote the expression of specific mRNAs. This chain is Adapter SH3BGRL, found in Homo sapiens (Human).